Reading from the N-terminus, the 274-residue chain is Dermonecrotic toxin LspiSicTox-betaIII1 G (274 aa).

H5 is a catalytic residue. Residues E25 and D27 each coordinate Mg(2+). Residue H41 is the Nucleophile of the active site. 2 cysteine pairs are disulfide-bonded: C45-C51 and C47-C189. The N-linked (GlcNAc...) asparagine glycan is linked to N66. Position 85 (D85) interacts with Mg(2+).

The protein belongs to the arthropod phospholipase D family. Class II subfamily. The cofactor is Mg(2+). In terms of tissue distribution, expressed by the venom gland.

Its subcellular location is the secreted. The catalysed reaction is an N-(acyl)-sphingosylphosphocholine = an N-(acyl)-sphingosyl-1,3-cyclic phosphate + choline. The enzyme catalyses an N-(acyl)-sphingosylphosphoethanolamine = an N-(acyl)-sphingosyl-1,3-cyclic phosphate + ethanolamine. It catalyses the reaction a 1-acyl-sn-glycero-3-phosphocholine = a 1-acyl-sn-glycero-2,3-cyclic phosphate + choline. It carries out the reaction a 1-acyl-sn-glycero-3-phosphoethanolamine = a 1-acyl-sn-glycero-2,3-cyclic phosphate + ethanolamine. Functionally, dermonecrotic toxins cleave the phosphodiester linkage between the phosphate and headgroup of certain phospholipids (sphingolipid and lysolipid substrates), forming an alcohol (often choline) and a cyclic phosphate. This toxin acts on sphingomyelin (SM). It may also act on ceramide phosphoethanolamine (CPE), lysophosphatidylcholine (LPC) and lysophosphatidylethanolamine (LPE), but not on lysophosphatidylserine (LPS), and lysophosphatidylglycerol (LPG). It acts by transphosphatidylation, releasing exclusively cyclic phosphate products as second products. Induces dermonecrosis, hemolysis, increased vascular permeability, edema, inflammatory response, and platelet aggregation. The sequence is that of Dermonecrotic toxin LspiSicTox-betaIII1 G from Loxosceles spinulosa (Recluse spider).